The sequence spans 494 residues: Glycerol kinase (494 aa).

Residue Thr13 participates in ADP binding. ATP-binding residues include Thr13, Thr14, and Ser15. Thr13 provides a ligand contact to sn-glycerol 3-phosphate. An ADP-binding site is contributed by Arg17. Positions 83, 84, 135, and 244 each coordinate sn-glycerol 3-phosphate. Glycerol contacts are provided by Arg83, Glu84, Tyr135, Asp244, and Gln245. Residues Thr266 and Gly309 each coordinate ADP. Thr266, Gly309, Gln313, and Gly410 together coordinate ATP. Positions 410 and 414 each coordinate ADP.

Belongs to the FGGY kinase family.

The enzyme catalyses glycerol + ATP = sn-glycerol 3-phosphate + ADP + H(+). It functions in the pathway polyol metabolism; glycerol degradation via glycerol kinase pathway; sn-glycerol 3-phosphate from glycerol: step 1/1. With respect to regulation, inhibited by fructose 1,6-bisphosphate (FBP). In terms of biological role, key enzyme in the regulation of glycerol uptake and metabolism. Catalyzes the phosphorylation of glycerol to yield sn-glycerol 3-phosphate. The polypeptide is Glycerol kinase (Shewanella sp. (strain MR-7)).